We begin with the raw amino-acid sequence, 325 residues long: Beta-ketoacyl-[acyl-carrier-protein] synthase III (325 aa).

Active-site residues include cysteine 112 and histidine 250. Residues 251-255 (QANIR) form an ACP-binding region. Asparagine 280 is an active-site residue.

It belongs to the thiolase-like superfamily. FabH family. As to quaternary structure, homodimer.

It localises to the cytoplasm. It carries out the reaction malonyl-[ACP] + acetyl-CoA + H(+) = 3-oxobutanoyl-[ACP] + CO2 + CoA. Its pathway is lipid metabolism; fatty acid biosynthesis. Catalyzes the condensation reaction of fatty acid synthesis by the addition to an acyl acceptor of two carbons from malonyl-ACP. Catalyzes the first condensation reaction which initiates fatty acid synthesis and may therefore play a role in governing the total rate of fatty acid production. Possesses both acetoacetyl-ACP synthase and acetyl transacylase activities. Its substrate specificity determines the biosynthesis of branched-chain and/or straight-chain of fatty acids. The protein is Beta-ketoacyl-[acyl-carrier-protein] synthase III of Streptococcus mutans serotype c (strain ATCC 700610 / UA159).